The chain runs to 200 residues: 3-isopropylmalate dehydratase small subunit (200 aa).

The protein belongs to the LeuD family. LeuD type 1 subfamily. Heterodimer of LeuC and LeuD.

The enzyme catalyses (2R,3S)-3-isopropylmalate = (2S)-2-isopropylmalate. Its pathway is amino-acid biosynthesis; L-leucine biosynthesis; L-leucine from 3-methyl-2-oxobutanoate: step 2/4. In terms of biological role, catalyzes the isomerization between 2-isopropylmalate and 3-isopropylmalate, via the formation of 2-isopropylmaleate. This is 3-isopropylmalate dehydratase small subunit from Aliivibrio fischeri (strain ATCC 700601 / ES114) (Vibrio fischeri).